Here is a 378-residue protein sequence, read N- to C-terminus: Chaperone protein DnaJ (378 aa).

The J domain occupies 5–72 (DFYEVLGVPK…QKRAAYDQFG (68 aa)). A CR-type zinc finger spans residues 138 to 216 (GKEAQIRIPS…CHGQGKVKKQ (79 aa)). Zn(2+)-binding residues include Cys151, Cys154, Cys168, Cys171, Cys190, Cys193, Cys204, and Cys207. CXXCXGXG motif repeat units follow at residues 151 to 158 (CETCHGSG), 168 to 175 (CTTCSGTG), 190 to 197 (CPHCRGTG), and 204 to 211 (CVTCHGQG). Positions 354–378 (SLKKGGGKHSPSGESWTDRLKNLFT) are disordered. Over residues 369–378 (WTDRLKNLFT) the composition is skewed to basic and acidic residues.

The protein belongs to the DnaJ family. In terms of assembly, homodimer. Zn(2+) is required as a cofactor.

The protein resides in the cytoplasm. Participates actively in the response to hyperosmotic and heat shock by preventing the aggregation of stress-denatured proteins and by disaggregating proteins, also in an autonomous, DnaK-independent fashion. Unfolded proteins bind initially to DnaJ; upon interaction with the DnaJ-bound protein, DnaK hydrolyzes its bound ATP, resulting in the formation of a stable complex. GrpE releases ADP from DnaK; ATP binding to DnaK triggers the release of the substrate protein, thus completing the reaction cycle. Several rounds of ATP-dependent interactions between DnaJ, DnaK and GrpE are required for fully efficient folding. Also involved, together with DnaK and GrpE, in the DNA replication of plasmids through activation of initiation proteins. The protein is Chaperone protein DnaJ of Paracidovorax citrulli (strain AAC00-1) (Acidovorax citrulli).